We begin with the raw amino-acid sequence, 240 residues long: Small ribosomal subunit protein uS3 (240 aa).

The KH type-2 domain occupies 39–107; it reads IRDFIKKEAK…ELHLNIVEVR (69 aa). Composition is skewed to basic and acidic residues over residues 212–221 and 231–240; these read PQARDRRATE and PRRDRDRDAR. The disordered stretch occupies residues 212–240; that stretch reads PQARDRRATEAQDGPSPRGPRRDRDRDAR.

It belongs to the universal ribosomal protein uS3 family. As to quaternary structure, part of the 30S ribosomal subunit. Forms a tight complex with proteins S10 and S14.

Its function is as follows. Binds the lower part of the 30S subunit head. Binds mRNA in the 70S ribosome, positioning it for translation. The polypeptide is Small ribosomal subunit protein uS3 (Paracoccus denitrificans (strain Pd 1222)).